Consider the following 86-residue polypeptide: Omega-theraphotoxin-Hhn1f 1 (86 aa).

A signal peptide spans 1–21 (MKSIVFVALFGLALLAVVCSA). Residues 22-50 (SEDAHKELLKEVVRAMVVDKTDAVQAEER) constitute a propeptide that is removed on maturation. 3 disulfide bridges follow: cysteine 52-cysteine 66, cysteine 59-cysteine 71, and cysteine 65-cysteine 78.

The protein belongs to the neurotoxin 10 (Hwtx-1) family. 17 (Hntx-9) subfamily. Expressed by the venom gland.

It localises to the secreted. Ion channel inhibitor. The chain is Omega-theraphotoxin-Hhn1f 1 from Cyriopagopus hainanus (Chinese bird spider).